The following is a 480-amino-acid chain: Cytochrome P450 724B1 (480 aa).

Residues 6–26 (LVLAALVILLALLLTLVLSHF) form a helical membrane-spanning segment. Cys-426 serves as a coordination point for heme.

Belongs to the cytochrome P450 family. The cofactor is heme. As to expression, ubiquitously expressed at low levels, but preferentially in the internodes and the florets before flowering.

The protein resides in the membrane. The enzyme catalyses campesterol + reduced [NADPH--hemoprotein reductase] + O2 = (22S)-22-hydroxycampesterol + oxidized [NADPH--hemoprotein reductase] + H2O + H(+). Its pathway is plant hormone biosynthesis; brassinosteroid biosynthesis. Involved in brassinosteroid biosynthesis. May catalyze a C6-oxidation step and may be involved to supply 6-deoxotyphasterol and typhasterol. Involved in internode elongation and seed development. Catalyzes the conversion of campesterol (CR) to (22S)-22-hydroxycampesterol (22-OHCR, 22-hydroxyCR). The polypeptide is Cytochrome P450 724B1 (Oryza sativa subsp. japonica (Rice)).